Here is a 94-residue protein sequence, read N- to C-terminus: Large ribosomal subunit protein bL25 (94 aa).

The protein belongs to the bacterial ribosomal protein bL25 family. Part of the 50S ribosomal subunit; part of the 5S rRNA/L5/L18/L25 subcomplex. Contacts the 5S rRNA. Binds to the 5S rRNA independently of L5 and L18.

In terms of biological role, this is one of the proteins that binds to the 5S RNA in the ribosome where it forms part of the central protuberance. The sequence is that of Large ribosomal subunit protein bL25 from Pectobacterium atrosepticum (strain SCRI 1043 / ATCC BAA-672) (Erwinia carotovora subsp. atroseptica).